Here is a 158-residue protein sequence, read N- to C-terminus: Methylglyoxal synthase (158 aa).

The 158-residue stretch at 1-158 (MRRKLRIALV…AFEESLKVKE (158 aa)) folds into the MGS-like domain. Residues His12, Lys16, 38–41 (TGTT), and 63–64 (SG) each bind substrate. Asp69 (proton donor/acceptor) is an active-site residue. His96 serves as a coordination point for substrate.

It belongs to the methylglyoxal synthase family.

The catalysed reaction is dihydroxyacetone phosphate = methylglyoxal + phosphate. In terms of biological role, catalyzes the formation of methylglyoxal from dihydroxyacetone phosphate. In Treponema socranskii, this protein is Methylglyoxal synthase.